The sequence spans 700 residues: MIEASKLTTEFGSLVFNDKIMKERLPKDIYKAVHKTIEKEPHLEPGCSYSCSSNHEGVGNREQCYHFTPPGSSPMTGLTAEKHDSFISPTEDGRSSWSSQEKSWLRANLMHQASQWWSSCHNSSMRGYQHGILHHHAFIKDGSLLLPTAFCSYGGEALDRDSLLRSMEALSNEAVKMMRLLGYEDVNRVNTTIGSEQEYFLIDKDFYKKRKDLLLTGRTLIGAPASKGQEMEDHYFGVIKPKVSAYMHDLDEELWKLGIPAKTKHNEVAPSQHELAPVFETANIAVDHNQLTMEVMKKVADKHNYACLLHEKPFEGVNGSGKHNNWSICTDTGINLLDPGKNPGENIPFLVFLMSVIAAVDEYAPILRLSVASAGNDHRLGGNEAPPAIISIFVGDELAEVLKAVEAGEAYKAAGKSQMTWEQQYFTFTKDNTDRNRTSPFAFTGNKFESDGGHSSVANGKYGPQHMQLQKEVATLNAKLSAYSGDELKEKVKEVLKETLLAHKRVLFNGNGYTDEWVEEAAKRGLPNLKALPDCMPYWISDESIDLFTRHGIFTKEEIYSRYEILLENYSKSIHIESLTMQEMIRKDLTEGLVAYEKDLSKEIVQKKSLLDGDCCALELGVLKSLDKSSAEMGKALSKLFEDTKKAEGMTEALETASYYESTVLADMDELRKYADEAEALIPEKYLSYPTYGEMLFSLR.

One can recognise a GS beta-grasp domain in the interval Y65 to G155. Residues D159–L589 form the GS catalytic domain. Mg(2+)-binding residues include E196, E198, E267, and E274. Residues N318 to G319 and G319 contribute to the L-glutamate site. H323 is a binding site for Mg(2+). ATP contacts are provided by S327 and R435. R435 lines the L-glutamate pocket. E472 contributes to the Mg(2+) binding site.

The protein belongs to the glutamine synthetase family. In terms of assembly, homohexamer. Mg(2+) serves as cofactor.

The protein localises to the cytoplasm. It carries out the reaction L-glutamate + NH4(+) + ATP = L-glutamine + ADP + phosphate + H(+). Its activity is regulated as follows. The activity of this enzyme is not controlled by adenylation. In terms of biological role, catalyzes the ATP-dependent biosynthesis of glutamine from glutamate and ammonia. The protein is Glutamine synthetase of Butyrivibrio fibrisolvens.